The primary structure comprises 456 residues: Exodeoxyribonuclease 7 large subunit (456 aa).

This sequence belongs to the XseA family. Heterooligomer composed of large and small subunits.

It is found in the cytoplasm. The enzyme catalyses Exonucleolytic cleavage in either 5'- to 3'- or 3'- to 5'-direction to yield nucleoside 5'-phosphates.. Functionally, bidirectionally degrades single-stranded DNA into large acid-insoluble oligonucleotides, which are then degraded further into small acid-soluble oligonucleotides. The chain is Exodeoxyribonuclease 7 large subunit from Lactobacillus delbrueckii subsp. bulgaricus (strain ATCC 11842 / DSM 20081 / BCRC 10696 / JCM 1002 / NBRC 13953 / NCIMB 11778 / NCTC 12712 / WDCM 00102 / Lb 14).